A 268-amino-acid polypeptide reads, in one-letter code: Cell division coordinator CpoB (268 aa).

The N-terminal stretch at 1 to 21 (MRMCRRVVTVLALSLPLAAWA) is a signal peptide. Residues 58-94 (QLFMQLQQMQDQLSRQQGIIEELQNDVSRMKQENLER) are a coiled coil. The segment at 104–146 (SGAAPAATPDNSSGGGASNAAPDAAAGAAAQQPAGSSQPGDPA) is disordered. Residues 121–143 (SNAAPDAAAGAAAQQPAGSSQPG) show a composition bias toward low complexity. TPR repeat units lie at residues 149–181 (KLYY…YPNS), 185–218 (GNAQ…YPKH), and 222–255 (PDSL…YPGT).

It belongs to the CpoB family.

It localises to the periplasm. In terms of biological role, mediates coordination of peptidoglycan synthesis and outer membrane constriction during cell division. The sequence is that of Cell division coordinator CpoB from Pseudomonas putida (strain ATCC 47054 / DSM 6125 / CFBP 8728 / NCIMB 11950 / KT2440).